We begin with the raw amino-acid sequence, 250 residues long: 2,3-bisphosphoglycerate-dependent phosphoglycerate mutase (250 aa).

Substrate contacts are provided by residues 8–15 (RHGESQWN), 21–22 (TG), Arg60, 87–90 (ERHY), Lys98, 114–115 (RR), and 183–184 (GN). The active-site Tele-phosphohistidine intermediate is His9. The active-site Proton donor/acceptor is Glu87.

The protein belongs to the phosphoglycerate mutase family. BPG-dependent PGAM subfamily. In terms of assembly, homodimer.

It catalyses the reaction (2R)-2-phosphoglycerate = (2R)-3-phosphoglycerate. It participates in carbohydrate degradation; glycolysis; pyruvate from D-glyceraldehyde 3-phosphate: step 3/5. Functionally, catalyzes the interconversion of 2-phosphoglycerate and 3-phosphoglycerate. This chain is 2,3-bisphosphoglycerate-dependent phosphoglycerate mutase, found in Bordetella parapertussis (strain 12822 / ATCC BAA-587 / NCTC 13253).